Here is a 302-residue protein sequence, read N- to C-terminus: Glutamate/aspartate import solute-binding protein (302 aa).

The N-terminal stretch at 1–22 (MQLRKLTTAMLVMGLSAGLAHA) is a signal peptide.

Belongs to the bacterial solute-binding protein 3 family. In terms of assembly, the complex is composed of two ATP-binding proteins (GltL), two transmembrane proteins (GltJ and GltK) and a solute-binding protein (GltI).

It is found in the periplasm. Part of the ABC transporter complex GltIJKL involved in glutamate and aspartate uptake. Binds to both glutamate and aspartate. This chain is Glutamate/aspartate import solute-binding protein (gltI), found in Salmonella typhimurium (strain LT2 / SGSC1412 / ATCC 700720).